A 431-amino-acid chain; its full sequence is Histidinol dehydrogenase (431 aa).

3 residues coordinate NAD(+): Tyr127, Gln189, and Asn212. Positions 237, 259, and 262 each coordinate substrate. Zn(2+) contacts are provided by Gln259 and His262. Catalysis depends on proton acceptor residues Glu326 and His327. Residues His327, Asp360, Glu414, and His419 each contribute to the substrate site. Asp360 provides a ligand contact to Zn(2+). His419 provides a ligand contact to Zn(2+).

It belongs to the histidinol dehydrogenase family. Zn(2+) serves as cofactor.

The enzyme catalyses L-histidinol + 2 NAD(+) + H2O = L-histidine + 2 NADH + 3 H(+). Its pathway is amino-acid biosynthesis; L-histidine biosynthesis; L-histidine from 5-phospho-alpha-D-ribose 1-diphosphate: step 9/9. Functionally, catalyzes the sequential NAD-dependent oxidations of L-histidinol to L-histidinaldehyde and then to L-histidine. The sequence is that of Histidinol dehydrogenase from Xanthomonas oryzae pv. oryzae (strain KACC10331 / KXO85).